A 142-amino-acid chain; its full sequence is Large ribosomal subunit protein uL11 (142 aa).

It belongs to the universal ribosomal protein uL11 family. In terms of assembly, part of the ribosomal stalk of the 50S ribosomal subunit. Interacts with L10 and the large rRNA to form the base of the stalk. L10 forms an elongated spine to which L12 dimers bind in a sequential fashion forming a multimeric L10(L12)X complex. In terms of processing, one or more lysine residues are methylated.

In terms of biological role, forms part of the ribosomal stalk which helps the ribosome interact with GTP-bound translation factors. The chain is Large ribosomal subunit protein uL11 from Nocardioides sp. (strain ATCC BAA-499 / JS614).